The primary structure comprises 503 residues: Basic immunoglobulin-like variable motif-containing protein (503 aa).

Basic and acidic residues predominate over residues 1 to 26; the sequence is MPNVAETERSNDSGNGEHKSERKSPE. 3 disordered regions span residues 1–33, 152–184, and 438–469; these read MPNV…QGAV, TTNS…ECPQ, and ESQP…GRSF. Over residues 155–172 the composition is skewed to basic residues; that stretch reads SKHKSGNAKKQVSKRKTS. Positions 173 to 184 are enriched in basic and acidic residues; that stretch reads DKKGRYQKECPQ.

This sequence belongs to the BIVM family. In terms of tissue distribution, widely expressed. Expressed at higher level in spleen, ovary, small intestine, colon, peripheral blood leukocytes and liver. Also expressed in testis, ovary, aorta, appendix, trachea, pituitary gland, bladder, uterus, spinal cord, salivary gland, stomach, mammary gland and bone marrow. Weakly or not expressed in fetal spleen, adult thymus and certain cancer cell lines.

Its subcellular location is the cytoplasm. It is found in the nucleus. The protein is Basic immunoglobulin-like variable motif-containing protein (BIVM) of Homo sapiens (Human).